Here is a 328-residue protein sequence, read N- to C-terminus: Malate dehydrogenase (328 aa).

11–17 provides a ligand contact to NAD(+); sequence GAAGQIG. 2 residues coordinate substrate: Arg-94 and Arg-100. Residues Asn-107, Gln-114, and 131–133 each bind NAD(+); that span reads VGN. 2 residues coordinate substrate: Asn-133 and Arg-164. His-189 serves as the catalytic Proton acceptor.

Belongs to the LDH/MDH superfamily. MDH type 2 family.

It catalyses the reaction (S)-malate + NAD(+) = oxaloacetate + NADH + H(+). Catalyzes the reversible oxidation of malate to oxaloacetate. The chain is Malate dehydrogenase from Stenotrophomonas maltophilia (strain K279a).